The following is a 162-amino-acid chain: uncharacterized protein (162 aa).

The signal sequence occupies residues 1 to 34 (MRKKNNIKKWLLIIAGFLIICIITLFVMVSGNKV).

This is an uncharacterized protein from Bacillus subtilis (strain 168).